A 952-amino-acid polypeptide reads, in one-letter code: Glutamate receptor 2.7 (952 aa).

Residues 1 to 32 form the signal peptide; it reads MKVMNPRKTNNTFMYYFVLFVCGFVLMEGCLG. Topologically, residues 33 to 582 are extracellular; that stretch reads QNQTTEIKVG…NTWVFLRPWS (550 aa). 5 N-linked (GlcNAc...) asparagine glycosylation sites follow: Asn-34, Asn-60, Asn-355, Asn-428, and Asn-546. Residues 583–603 form a helical membrane-spanning segment; the sequence is LDLWVTTACFFVFIGFIVWIL. Residues 604–612 lie on the Cytoplasmic side of the membrane; that stretch reads EHRVNTDFR. A helical membrane pass occupies residues 613-633; sequence GPPHHQIGTSFWFAFSTMNFA. Topologically, residues 634 to 637 are cytoplasmic; the sequence is HREK. A helical membrane pass occupies residues 638 to 658; that stretch reads VVSNLARFVVLVWCFVVLVLI. The Extracellular segment spans residues 659–821; the sequence is QSYTANLTSF…LSSNHLSLSS (163 aa). N-linked (GlcNAc...) asparagine glycosylation is found at Asn-664, Asn-728, Asn-748, Asn-784, and Asn-809. A helical membrane pass occupies residues 822 to 842; it reads FWGLFLIAGIASFLALLIFVA. Residues 843–952 are Cytoplasmic-facing; the sequence is NFLYEHKHTL…ESAIIQCEGE (110 aa). A compositionally biased stretch (polar residues) spans 889 to 908; that stretch reads VSSPITQGSSSPLTDQSTPL. Disordered stretches follow at residues 889–914 and 932–952; these read VSSPITQGSSSPLTDQSTPLPRSPEQ and FTTQSEQVEDEESAIIQCEGE.

It belongs to the glutamate-gated ion channel (TC 1.A.10.1) family. May form heteromers. Expressed predominantly in leaves.

It localises to the membrane. Its function is as follows. Glutamate-gated receptor that probably acts as a non-selective cation channel. May be involved in light-signal transduction and calcium homeostasis via the regulation of calcium influx into cells. The protein is Glutamate receptor 2.7 (GLR2.7) of Arabidopsis thaliana (Mouse-ear cress).